A 2656-amino-acid polypeptide reads, in one-letter code: 1-phosphatidylinositol 3-phosphate 5-kinase (2656 aa).

A disordered region spans residues 24–159 (FGTDDSQKDF…NSTNNDTSSN (136 aa)). Composition is skewed to low complexity over residues 59–107 (NNNN…NNNN) and 124–159 (SNTTNTNTNITTNTNITTNTNTNTNTNSTNNDTSSN). The FYVE-type zinc-finger motif lies at 198–255 (DHSSAVCYECSEEFTTFKRRHHCRLCGQIFCWKCSQKTLTDGKGERVRVCNFCYRRYM). Residues Cys204, Cys207, Cys220, Cys223, Cys228, Cys231, Cys247, and Cys250 each coordinate Zn(2+). Over residues 304–331 (NVSLGNSGDNSSFVQSPNNNFSQSPTFS) the composition is skewed to polar residues. Disordered stretches follow at residues 304–383 (NVSL…NNQQ), 465–495 (DHHQQQQQSNSHGSLSATPSNTPSGLISPIV), 517–570 (DNLD…SSSS), 618–657 (NNNDNGNDDNNNNNNDNNNNTTIEVDPRHSMPSKTSNTSF), 670–823 (TIGR…QQQP), 1115–1150 (SNSIQLQQQQNSNSPASLQNSTTTTNNNNNNNNNST), 1633–1659 (RSKRNVQQQQQQQQHQQSQQPQPQILI), 1710–1844 (VNNN…SSTP), 2031–2127 (QQQQ…SISP), 2179–2208 (NQQQQQQQQPSPIIIDEKDDRNTEKSSIIE), 2246–2304 (QQGD…SSNS), and 2617–2656 (NNNNNYNYNNFNNNNFNNNNNISNNGNGNINQRQVQQINK). Low complexity predominate over residues 332–355 (QQQQQQQQQQQQQQQQQQQQQQQQ). Composition is skewed to polar residues over residues 356–371 (TTGVMSGLNPFSNSTL), 473–489 (SNSHGSLSATPSNTPSG), and 542–557 (SHSSANDLGTSNTVST). Composition is skewed to low complexity over residues 558-570 (GESNSESKLSSSS), 618-637 (NNNDNGNDDNNNNNNDNNNN), 674-730 (NNNN…NLPN), 743-757 (QQQQQQQQQQQQPQP), and 811-823 (PSSSSNNQQQQQP). Low complexity-rich tracts occupy residues 1639-1656 (QQQQQQQQHQQSQQPQPQ) and 1710-1746 (VNNNNNNNNNNNNNNNNNNNNNNNNNNNNNNNNNNNN). Coiled coils occupy residues 1741-1823 (NNNN…NNNN) and 2019-2061 (KRIS…QQEQ). Residues 1750 to 1798 (NKSENENENKNENKNENENENENKNENKNENENENKKENENQLEIKNEN) show a composition bias toward basic and acidic residues. Composition is skewed to low complexity over residues 1807–1833 (NNNNNNNNNNNNNNNNNNNNNNNIDNN), 2031–2061 (QQQQQQDSQDLESSSQQQQQQQQQQQEQQEQ), 2078–2107 (SPSSLLKISSSSLPKDNNNSSENKPNSETN), and 2118–2127 (LSGSPISISP). The segment covering 2193–2202 (IDEKDDRNTE) has biased composition (basic and acidic residues). Low complexity-rich tracts occupy residues 2252-2283 (NNNNNNNNNNNNNNNNNNNNNNNNNNNTNNNN) and 2618-2647 (NNNNYNYNNFNNNNFNNNNNISNNGNGNIN). The PIPK domain maps to 2275–2596 (NNNNTNNNNE…RFRDAMWLYF (322 aa)).

The protein localises to the endosome membrane. The protein resides in the early endosome membrane. It localises to the cytoplasmic vesicle. It is found in the phagosome membrane. Its subcellular location is the late endosome membrane. The enzyme catalyses a 1,2-diacyl-sn-glycero-3-phospho-(1D-myo-inositol-3-phosphate) + ATP = a 1,2-diacyl-sn-glycero-3-phospho-(1D-myo-inositol-3,5-bisphosphate) + ADP + H(+). It carries out the reaction a 1,2-diacyl-sn-glycero-3-phospho-(1D-myo-inositol) + ATP = a 1,2-diacyl-sn-glycero-3-phospho-(1D-myo-inositol-5-phosphate) + ADP + H(+). The catalysed reaction is L-seryl-[protein] + ATP = O-phospho-L-seryl-[protein] + ADP + H(+). Functionally, dual specificity kinase part of the PI(3,5)P2 regulatory complex which regulates both the synthesis and turnover of phosphatidylinositol 3,5-bisphosphate (PtdIns(3,5)P2). Catalyzes the phosphorylation of phosphatidylinositol 3-phosphate on the fifth hydroxyl of the myo-inositol ring, to form phosphatidylinositol 3,5-bisphosphate. The sequence is that of 1-phosphatidylinositol 3-phosphate 5-kinase (pip5k3) from Dictyostelium discoideum (Social amoeba).